Reading from the N-terminus, the 180-residue chain is Adenine phosphoribosyltransferase (180 aa).

Belongs to the purine/pyrimidine phosphoribosyltransferase family. In terms of assembly, homodimer.

The protein resides in the cytoplasm. It catalyses the reaction AMP + diphosphate = 5-phospho-alpha-D-ribose 1-diphosphate + adenine. It functions in the pathway purine metabolism; AMP biosynthesis via salvage pathway; AMP from adenine: step 1/1. Functionally, catalyzes a salvage reaction resulting in the formation of AMP, that is energically less costly than de novo synthesis. This Mycobacterium avium (strain 104) protein is Adenine phosphoribosyltransferase.